Consider the following 115-residue polypeptide: Large ribosomal subunit protein bL20 (115 aa).

This sequence belongs to the bacterial ribosomal protein bL20 family.

Its function is as follows. Binds directly to 23S ribosomal RNA and is necessary for the in vitro assembly process of the 50S ribosomal subunit. It is not involved in the protein synthesizing functions of that subunit. In Borrelia turicatae (strain 91E135), this protein is Large ribosomal subunit protein bL20.